The chain runs to 263 residues: Type III pantothenate kinase (263 aa).

Position 6 to 13 (6 to 13) interacts with ATP; the sequence is DVGNTNIK. Position 108–111 (108–111) interacts with substrate; it reads GSDR. Asp-110 functions as the Proton acceptor in the catalytic mechanism. K(+) is bound at residue Asp-131. Thr-134 contacts ATP. Position 187 (Thr-187) interacts with substrate.

The protein belongs to the type III pantothenate kinase family. Homodimer. The cofactor is NH4(+). K(+) serves as cofactor.

The protein localises to the cytoplasm. It catalyses the reaction (R)-pantothenate + ATP = (R)-4'-phosphopantothenate + ADP + H(+). Its pathway is cofactor biosynthesis; coenzyme A biosynthesis; CoA from (R)-pantothenate: step 1/5. Functionally, catalyzes the phosphorylation of pantothenate (Pan), the first step in CoA biosynthesis. The chain is Type III pantothenate kinase from Anaplasma phagocytophilum (strain HZ).